Reading from the N-terminus, the 130-residue chain is Small ribosomal subunit protein uS8 (130 aa).

This sequence belongs to the universal ribosomal protein uS8 family. Part of the 30S ribosomal subunit. Contacts proteins S5 and S12.

Its function is as follows. One of the primary rRNA binding proteins, it binds directly to 16S rRNA central domain where it helps coordinate assembly of the platform of the 30S subunit. The sequence is that of Small ribosomal subunit protein uS8 from Shigella boydii serotype 18 (strain CDC 3083-94 / BS512).